The primary structure comprises 248 residues: 2,3-bisphosphoglycerate-dependent phosphoglycerate mutase (248 aa).

Residues 10–17 (RHGQSEWN), 23–24 (TG), Arg-62, 89–92 (ERHY), Lys-100, 116–117 (RR), and 183–184 (GN) each bind substrate. His-11 acts as the Tele-phosphohistidine intermediate in catalysis. Catalysis depends on Glu-89, which acts as the Proton donor/acceptor.

Belongs to the phosphoglycerate mutase family. BPG-dependent PGAM subfamily.

The enzyme catalyses (2R)-2-phosphoglycerate = (2R)-3-phosphoglycerate. It functions in the pathway carbohydrate degradation; glycolysis; pyruvate from D-glyceraldehyde 3-phosphate: step 3/5. Catalyzes the interconversion of 2-phosphoglycerate and 3-phosphoglycerate. In Corynebacterium glutamicum (strain ATCC 13032 / DSM 20300 / JCM 1318 / BCRC 11384 / CCUG 27702 / LMG 3730 / NBRC 12168 / NCIMB 10025 / NRRL B-2784 / 534), this protein is 2,3-bisphosphoglycerate-dependent phosphoglycerate mutase.